The primary structure comprises 437 residues: Dihydrofolate synthase/folylpolyglutamate synthase (437 aa).

7,8-dihydropteroate is bound at residue 28–30 (DLG). 58-61 (GKGT) is an ATP binding site. Position 82 (Ser82) interacts with Mg(2+). Residue 120–123 (TYFE) participates in 7,8-dihydropteroate binding. Glu144 contributes to the Mg(2+) binding site. 151 to 153 (LDA) contributes to the 7,8-dihydropteroate binding site. His171 is a binding site for Mg(2+). Asn255, Arg287, and Asp316 together coordinate ATP.

It belongs to the folylpolyglutamate synthase family. In terms of assembly, monomer. Mg(2+) serves as cofactor.

The catalysed reaction is 7,8-dihydropteroate + L-glutamate + ATP = 7,8-dihydrofolate + ADP + phosphate + H(+). It carries out the reaction (6S)-5,6,7,8-tetrahydrofolyl-(gamma-L-Glu)(n) + L-glutamate + ATP = (6S)-5,6,7,8-tetrahydrofolyl-(gamma-L-Glu)(n+1) + ADP + phosphate + H(+). It catalyses the reaction 10-formyltetrahydrofolyl-(gamma-L-Glu)(n) + L-glutamate + ATP = 10-formyltetrahydrofolyl-(gamma-L-Glu)(n+1) + ADP + phosphate + H(+). The enzyme catalyses (6R)-5,10-methylenetetrahydrofolyl-(gamma-L-Glu)(n) + L-glutamate + ATP = (6R)-5,10-methylenetetrahydrofolyl-(gamma-L-Glu)(n+1) + ADP + phosphate + H(+). It participates in cofactor biosynthesis; tetrahydrofolate biosynthesis; 7,8-dihydrofolate from 2-amino-4-hydroxy-6-hydroxymethyl-7,8-dihydropteridine diphosphate and 4-aminobenzoate: step 2/2. The protein operates within cofactor biosynthesis; tetrahydrofolylpolyglutamate biosynthesis. Functionally, functions in two distinct reactions of the de novo folate biosynthetic pathway. Catalyzes the addition of a glutamate residue to dihydropteroate (7,8-dihydropteroate or H2Pte) to form dihydrofolate (7,8-dihydrofolate monoglutamate or H2Pte-Glu). Also catalyzes successive additions of L-glutamate to tetrahydrofolate or 10-formyltetrahydrofolate or 5,10-methylenetetrahydrofolate, leading to folylpolyglutamate derivatives. The protein is Dihydrofolate synthase/folylpolyglutamate synthase (folC) of Haemophilus influenzae (strain ATCC 51907 / DSM 11121 / KW20 / Rd).